Reading from the N-terminus, the 196-residue chain is Phosphoheptose isomerase (196 aa).

Positions 31 to 196 (VARQFKAGNK…KAGLEAQIAV (166 aa)) constitute an SIS domain. 46-48 (NGG) is a binding site for substrate. Zn(2+) is bound by residues H55 and E59. Substrate contacts are provided by residues E59, 88-89 (ND), 114-116 (STS), S119, and Q166. Zn(2+)-binding residues include Q166 and H174.

It belongs to the SIS family. GmhA subfamily. Zn(2+) serves as cofactor.

It is found in the cytoplasm. The catalysed reaction is 2 D-sedoheptulose 7-phosphate = D-glycero-alpha-D-manno-heptose 7-phosphate + D-glycero-beta-D-manno-heptose 7-phosphate. Its pathway is carbohydrate biosynthesis; D-glycero-D-manno-heptose 7-phosphate biosynthesis; D-glycero-alpha-D-manno-heptose 7-phosphate and D-glycero-beta-D-manno-heptose 7-phosphate from sedoheptulose 7-phosphate: step 1/1. Catalyzes the isomerization of sedoheptulose 7-phosphate in D-glycero-D-manno-heptose 7-phosphate. This is Phosphoheptose isomerase from Crocosphaera subtropica (strain ATCC 51142 / BH68) (Cyanothece sp. (strain ATCC 51142)).